A 210-amino-acid chain; its full sequence is Protein LURP-one-related 5 (210 aa).

The protein belongs to the LOR family.

Its function is as follows. Might be related to the phospholipid scramblase and tubby-like superfamily of membrane tethered transcription factors. This is Protein LURP-one-related 5 from Arabidopsis thaliana (Mouse-ear cress).